A 704-amino-acid chain; its full sequence is ATP-dependent DNA helicase Hel308 (704 aa).

Residues glutamine 31 and 49 to 56 (SPTASGKT) each bind ATP. Positions 36-200 (RKGLLDGKRL…WLNAELVATN (165 aa)) constitute a Helicase ATP-binding domain. Residues 148 to 151 (DEFH) carry the DEAH box motif. A Helicase C-terminal domain is found at 235–439 (AIIAYTLDIV…AFYSFLISII (205 aa)). The binds Hjc stretch occupies residues 366-645 (VVGYMDLIPV…LHARVKDGVK (280 aa)). A required for helicase activity region spans residues 432 to 644 (YSFLISIIAS…ELHARVKDGV (213 aa)). The inhibits intrinsic ATPase, and helicase stretch occupies residues 646 to 704 (PELIELVKIPGIGRVRARLLYQHDIKKPEDIVLNPEKVKQLLGPNLGEKIVREAARTIA).

The protein belongs to the helicase family. Hel308 subfamily. Monomer; forms a 1:2 complex with Hjc, which may form a complex with Holliday junction DNA. Requires Mg(2+) as cofactor.

It carries out the reaction Couples ATP hydrolysis with the unwinding of duplex DNA by translocating in the 3'-5' direction.. The catalysed reaction is ATP + H2O = ADP + phosphate + H(+). The enzyme catalyses Couples ATP hydrolysis with the unwinding of duplex DNA at the replication fork by translocating in the 5'-3' direction. This creates two antiparallel DNA single strands (ssDNA). The leading ssDNA polymer is the template for DNA polymerase III holoenzyme which synthesizes a continuous strand.. Its activity is regulated as follows. Helicase activity is inhibited by Hjc and by PCNA123 and PCNA323. Its function is as follows. An ATP, Mg(2+)-dependent DNA 3'-5' and 5'-3' helicase that may be involved in repair of stalled replication forks. Stimulated by both ss and dsDNA. Unwinds both leading and lagging strands in replication fork structures, unlike orthologs in P.furiosus and M.thermautotrophicus which only unwind the lagging strand and only have 3'-5' helicase activity. Preferentially binds dsDNA with overhangs or branched DNA. Able to anneal DNA substrates that could form a replication fork-like structure, has replication fork reversal activity (at least in vitro). The polypeptide is ATP-dependent DNA helicase Hel308 (Sulfurisphaera tokodaii (strain DSM 16993 / JCM 10545 / NBRC 100140 / 7) (Sulfolobus tokodaii)).